A 432-amino-acid polypeptide reads, in one-letter code: Casein kinase II subunit alpha-4, chloroplastic (432 aa).

The transit peptide at 1-55 (MALRPCTGFTISSLRNASAANNNLFSLLSFSSSSPAKRNLLLSSLQDNLRRFASS) directs the protein to the chloroplast. The segment at 63–83 (LRNQQQQHQQQQQSRVKEKSE) is disordered. Positions 66-75 (QQQQHQQQQQ) are enriched in low complexity. The Protein kinase domain occupies 132 to 417 (YEVVRKVGRG…AKEAMAHPYF (286 aa)). ATP contacts are provided by residues 138–146 (VGRGKYSEV) and K161. The Proton acceptor role is filled by D249.

Belongs to the protein kinase superfamily. Ser/Thr protein kinase family. CK2 subfamily. Tetramer of two alpha and two beta chains. As to expression, expressed in root tips, lateral root primordia, cotyledons, leaf primordia, sepals, filaments, stigma, and anthers.

It is found in the plastid. Its subcellular location is the chloroplast. It carries out the reaction L-seryl-[protein] + ATP = O-phospho-L-seryl-[protein] + ADP + H(+). It catalyses the reaction L-threonyl-[protein] + ATP = O-phospho-L-threonyl-[protein] + ADP + H(+). Its function is as follows. Casein kinases are operationally defined by their preferential utilization of acidic proteins such as caseins as substrates. The alpha chain contains the catalytic site. Involved in the regulation of various developmental processes. Involved in the regulation of plant growth and flowering time. Involved in retrograde signaling in plant responses to abscisic acid (ABA) and heat stress. May act as an enhancing factor in abiotic stress signaling through modulation of the expression of some molecular players in retrograde signaling. Phosphorylates RuBisCo activase (RCA) at Thr-78. This Arabidopsis thaliana (Mouse-ear cress) protein is Casein kinase II subunit alpha-4, chloroplastic.